The chain runs to 188 residues: GPI-anchored hemophore ARB_01017 (188 aa).

The N-terminal stretch at 1–17 (MKLSVVALAALVSVAAA) is a signal peptide. In terms of domain architecture, CFEM spans 18 to 107 (QGVSELPKCA…SSSSGSASST (90 aa)). 4 cysteine pairs are disulfide-bonded: cysteine 26–cysteine 64, cysteine 30–cysteine 59, cysteine 39–cysteine 45, and cysteine 47–cysteine 80. Aspartate 42 contributes to the heme binding site. Residues 95 to 163 (TGGSSSSGSA…ATSTGAPTQT (69 aa)) are disordered. Asparagine 165 carries GPI-anchor amidated asparagine lipidation. Positions 166 to 188 (AAASVNANGGLLAAIAALVIAVA) are cleaved as a propeptide — removed in mature form.

The protein belongs to the RBT5 family. Post-translationally, the GPI-anchor is attached to the protein in the endoplasmic reticulum and serves to target the protein to the cell surface. There, the glucosamine-inositol phospholipid moiety is cleaved off and the GPI-modified mannoprotein is covalently attached via its lipidless GPI glycan remnant to the 1,6-beta-glucan of the outer cell wall layer.

Its subcellular location is the secreted. The protein resides in the cell wall. It is found in the cell membrane. Its function is as follows. GPI-anchored cell wall protein involved in stabilizing the cell wall. This is GPI-anchored hemophore ARB_01017 from Arthroderma benhamiae (strain ATCC MYA-4681 / CBS 112371) (Trichophyton mentagrophytes).